We begin with the raw amino-acid sequence, 645 residues long: Putative galactocerebrosidase (645 aa).

The signal sequence occupies residues methionine 1–alanine 16. Residues threonine 87 and tryptophan 128 each contribute to the substrate site. N-linked (GlcNAc...) asparagine glycosylation occurs at asparagine 141. A substrate-binding site is contributed by asparagine 171. Glutamate 172 (proton donor/acceptor) is an active-site residue. Asparagine 174 and asparagine 193 each carry an N-linked (GlcNAc...) asparagine glycan. The active-site Nucleophile is glutamate 248. Residues cysteine 261 and cysteine 365 are joined by a disulfide bond. 7 N-linked (GlcNAc...) asparagine glycosylation sites follow: asparagine 274, asparagine 395, asparagine 411, asparagine 532, asparagine 616, asparagine 620, and asparagine 638.

This sequence belongs to the glycosyl hydrolase 59 family.

The enzyme catalyses a beta-D-Gal-(1&lt;-&gt;1')-ceramide + H2O = an N-acyl-sphingoid base + D-galactose. It catalyses the reaction a beta-D-galactosyl-(1&lt;-&gt;1')-N-acylsphing-4-enine + H2O = an N-acylsphing-4-enine + D-galactose. In terms of biological role, hydrolyzes the galactose ester bonds of galactosylceramide, galactosylsphingoid base, lactosylceramide, and monogalactosyldiglyceride. C.elegans contain specific sphingoid bases, which are unique or different in structure compared to the sphingoid bases found in other animals. Two examples of these distinctive compounds are: 15-methylhexadecasphinganine and 15-methylhexadecasphing-4-enine. In Caenorhabditis elegans, this protein is Putative galactocerebrosidase.